The following is a 559-amino-acid chain: Intestinal-type alkaline phosphatase (559 aa).

An N-terminal signal peptide occupies residues 1–19 (MQGPWVLLLLGLRLQLSLS). D61 contacts Mg(2+). Zn(2+) is bound by residues D61 and S111. The active-site Phosphoserine intermediate is S111. A disulfide bridge connects residues C140 and C202. N141 carries an N-linked (GlcNAc...) asparagine glycan. Residue S174 coordinates Mg(2+). Residue E235 coordinates Ca(2+). N-linked (GlcNAc...) asparagine glycosylation occurs at N241. Residues F288, E289, and D304 each coordinate Ca(2+). A Mg(2+)-binding site is contributed by E330. Zn(2+) contacts are provided by D335, H339, D376, and H377. N426 carries N-linked (GlcNAc...) asparagine glycosylation. Zn(2+) is bound at residue H450. Cysteines 485 and 492 form a disulfide. The tract at residues 496-531 (PPADESQTTTTTRQTTITTTTTTTTTTTTPVHNSAR) is disordered. Low complexity predominate over residues 503–524 (TTTTTRQTTITTTTTTTTTTTT). N528 carries the GPI-anchor amidated asparagine lipid modification. Positions 529-559 (SARSLGPATAPLALALLAGMLMLLLGAPAES) are cleaved as a propeptide — removed in mature form.

This sequence belongs to the alkaline phosphatase family. As to quaternary structure, homodimer. The cofactor is Mg(2+). Zn(2+) serves as cofactor. Ca(2+) is required as a cofactor. As to expression, intestine and thymus.

The protein resides in the cell membrane. The enzyme catalyses a phosphate monoester + H2O = an alcohol + phosphate. Its function is as follows. Alkaline phosphatase that can hydrolyze various phosphate compounds. This chain is Intestinal-type alkaline phosphatase (Iap), found in Mus musculus (Mouse).